A 618-amino-acid chain; its full sequence is Glucose starvation modulator protein 1 (618 aa).

Positions 20-48 form a DNA-binding region, zn(2)-C6 fungal-type; that stretch reads CEFCHTKHIQCDVGRPCQNCLKRNIGKFC. The tract at residues 325–352 is disordered; that stretch reads ANANTHPSHNAKLESECDSSSHSDADLE. The span at 335–352 shows a compositional bias: basic and acidic residues; the sequence is AKLESECDSSSHSDADLE. Residues 466-538 form the PAS domain; the sequence is LLDLENMAKL…QIFNELLAFG (73 aa).

It belongs to the ERT1/acuK family.

It is found in the nucleus. Functionally, transcription factor which regulates nonfermentable carbon utilization. Binds specifically to 5'-CGGN(8)CGG-3' and 5'-CGGN(9)CGG-3' sequences in the promoter region. The chain is Glucose starvation modulator protein 1 (GSM1) from Saccharomyces cerevisiae (strain ATCC 204508 / S288c) (Baker's yeast).